The chain runs to 299 residues: Protease HtpX homolog (299 aa).

The next 2 membrane-spanning stretches (helical) occupy residues 14–34 and 39–59; these read WLLL…VGYL and GFGG…TMIF. Zn(2+) is bound at residue histidine 143. Residue glutamate 144 is part of the active site. Zn(2+) is bound at residue histidine 147. 2 helical membrane passes run 153 to 173 and 198 to 218; these read IRIS…AVMA and IILL…ATLV. Glutamate 227 lines the Zn(2+) pocket.

The protein belongs to the peptidase M48B family. Zn(2+) is required as a cofactor.

It localises to the cell membrane. This is Protease HtpX homolog from Streptococcus thermophilus (strain ATCC BAA-491 / LMD-9).